The primary structure comprises 358 residues: Probable ABC transporter periplasmic-binding protein y4fP (358 aa).

The signal sequence occupies residues 1–46; that stretch reads MRNVIKLTWSRRKRSASLDKGENIMKLAFAFATAAIVVAAAFPALA.

It belongs to the bacterial solute-binding protein 1 family.

Its subcellular location is the periplasm. In terms of biological role, probably part of the binding-protein-dependent transport system y4fNOP. The polypeptide is Probable ABC transporter periplasmic-binding protein y4fP (Sinorhizobium fredii (strain NBRC 101917 / NGR234)).